We begin with the raw amino-acid sequence, 372 residues long: Queuine tRNA-ribosyltransferase (372 aa).

The active-site Proton acceptor is aspartate 92. Residues 92–96 (DSGGF), aspartate 146, glutamine 188, and glycine 215 each bind substrate. Residues 246 to 252 (GIGTLRE) are RNA binding. The active-site Nucleophile is aspartate 265. Positions 270 to 274 (TRLGR) are RNA binding; important for wobble base 34 recognition. Zn(2+) contacts are provided by cysteine 303, cysteine 305, cysteine 308, and histidine 334.

It belongs to the queuine tRNA-ribosyltransferase family. Homodimer. Within each dimer, one monomer is responsible for RNA recognition and catalysis, while the other monomer binds to the replacement base PreQ1. Zn(2+) serves as cofactor.

It catalyses the reaction 7-aminomethyl-7-carbaguanine + guanosine(34) in tRNA = 7-aminomethyl-7-carbaguanosine(34) in tRNA + guanine. It participates in tRNA modification; tRNA-queuosine biosynthesis. Functionally, catalyzes the base-exchange of a guanine (G) residue with the queuine precursor 7-aminomethyl-7-deazaguanine (PreQ1) at position 34 (anticodon wobble position) in tRNAs with GU(N) anticodons (tRNA-Asp, -Asn, -His and -Tyr). Catalysis occurs through a double-displacement mechanism. The nucleophile active site attacks the C1' of nucleotide 34 to detach the guanine base from the RNA, forming a covalent enzyme-RNA intermediate. The proton acceptor active site deprotonates the incoming PreQ1, allowing a nucleophilic attack on the C1' of the ribose to form the product. After dissociation, two additional enzymatic reactions on the tRNA convert PreQ1 to queuine (Q), resulting in the hypermodified nucleoside queuosine (7-(((4,5-cis-dihydroxy-2-cyclopenten-1-yl)amino)methyl)-7-deazaguanosine). This Synechococcus sp. (strain CC9902) protein is Queuine tRNA-ribosyltransferase.